The following is a 245-amino-acid chain: Rhamnosyl O-methyltransferase (245 aa).

Positions Met1–Ala38 are cleaved as a signal peptide.

The protein belongs to the rhamnosyl O-methyltransferase family.

Its function is as follows. Catalyzes the O-methylation of the hydroxyl group located on C-2 of the first rhamnosyl residue linked to the phenolic group of glycosylated phenolphthiocerol dimycocerosates (PGL) and p-hydroxybenzoic acid derivatives (p-HBAD). The sequence is that of Rhamnosyl O-methyltransferase from Mycobacterium bovis (strain ATCC BAA-935 / AF2122/97).